A 705-amino-acid polypeptide reads, in one-letter code: MKSQILLRRTYSTTIPPPTANVRITHLSRIGKIHEARKLFDSCDSKSISSWNSMVAGYFANLMPRDARKLFDEMPDRNIISWNGLVSGYMKNGEIDEARKVFDLMPERNVVSWTALVKGYVHNGKVDVAESLFWKMPEKNKVSWTVMLIGFLQDGRIDDACKLYEMIPDKDNIARTSMIHGLCKEGRVDEAREIFDEMSERSVITWTTMVTGYGQNNRVDDARKIFDVMPEKTEVSWTSMLMGYVQNGRIEDAEELFEVMPVKPVIACNAMISGLGQKGEIAKARRVFDSMKERNDASWQTVIKIHERNGFELEALDLFILMQKQGVRPTFPTLISILSVCASLASLHHGKQVHAQLVRCQFDVDVYVASVLMTMYIKCGELVKSKLIFDRFPSKDIIMWNSIISGYASHGLGEEALKVFCEMPLSGSTKPNEVTFVATLSACSYAGMVEEGLKIYESMESVFGVKPITAHYACMVDMLGRAGRFNEAMEMIDSMTVEPDAAVWGSLLGACRTHSQLDVAEFCAKKLIEIEPENSGTYILLSNMYASQGRWADVAELRKLMKTRLVRKSPGCSWTEVENKVHAFTRGGINSHPEQESILKILDELDGLLREAGYNPDCSYALHDVDEEEKVNSLKYHSERLAVAYALLKLSEGIPIRVMKNLRVCSDCHTAIKIISKVKEREIILRDANRFHHFRNGECSCKDYW.

The transit peptide at 1–11 (MKSQILLRRTY) directs the protein to the mitochondrion. 15 PPR repeats span residues 16–46 (PPPT…CDSK), 47–77 (SISS…MPDR), 78–112 (NIIS…NVVS), 113–139 (WTAL…MPEK), 140–170 (NKVS…IPDK), 171–205 (DNIA…SVIT), 206–232 (WTTM…MPEK), 233–267 (TEVS…PVIA), 268–294 (CNAM…MKER), 295–329 (NDAS…GVRP), 330–364 (TFPT…QFDV), 365–395 (DVYV…FPSK), 396–430 (DIIM…GSTK), 432–462 (NEVT…MESV), and 468–498 (ITAH…MTVE). A type E motif region spans residues 503 to 578 (VWGSLLGACR…SPGCSWTEVE (76 aa)). Positions 579–610 (NKVHAFTRGGINSHPEQESILKILDELDGLLR) are type E(+) motif. The type DYW motif stretch occupies residues 611 to 705 (EAGYNPDCSY…NGECSCKDYW (95 aa)).

Belongs to the PPR family. PCMP-H subfamily.

The protein localises to the mitochondrion. This is Pentatricopeptide repeat-containing protein At1g09410, mitochondrial (PCMP-H18) from Arabidopsis thaliana (Mouse-ear cress).